Consider the following 78-residue polypeptide: UPF0349 protein SSP1836 (78 aa).

The protein belongs to the UPF0349 family.

This chain is UPF0349 protein SSP1836, found in Staphylococcus saprophyticus subsp. saprophyticus (strain ATCC 15305 / DSM 20229 / NCIMB 8711 / NCTC 7292 / S-41).